Consider the following 262-residue polypeptide: Small ribosomal subunit protein eS1 (262 aa).

The protein belongs to the eukaryotic ribosomal protein eS1 family. As to quaternary structure, component of the small ribosomal subunit. Mature ribosomes consist of a small (40S) and a large (60S) subunit. The 40S subunit contains about 33 different proteins and 1 molecule of RNA (18S). The 60S subunit contains about 49 different proteins and 3 molecules of RNA (25S, 5.8S and 5S).

Its subcellular location is the cytoplasm. This is Small ribosomal subunit protein eS1 from Theileria parva (East coast fever infection agent).